The primary structure comprises 214 residues: Methylthioribulose-1-phosphate dehydratase (214 aa).

Residues histidine 103 and histidine 105 each coordinate Zn(2+).

It belongs to the aldolase class II family. MtnB subfamily. It depends on Zn(2+) as a cofactor.

It catalyses the reaction 5-(methylsulfanyl)-D-ribulose 1-phosphate = 5-methylsulfanyl-2,3-dioxopentyl phosphate + H2O. It functions in the pathway amino-acid biosynthesis; L-methionine biosynthesis via salvage pathway; L-methionine from S-methyl-5-thio-alpha-D-ribose 1-phosphate: step 2/6. Functionally, catalyzes the dehydration of methylthioribulose-1-phosphate (MTRu-1-P) into 2,3-diketo-5-methylthiopentyl-1-phosphate (DK-MTP-1-P). This is Methylthioribulose-1-phosphate dehydratase from Granulibacter bethesdensis (strain ATCC BAA-1260 / CGDNIH1).